The sequence spans 208 residues: Histone H1t (208 aa).

The segment covering 1 to 12 (MSETAPAASSTL) has biased composition (polar residues). The tract at residues 1–39 (MSETAPAASSTLVPAPVEKPSSKRRGKKPGLAPARKPRG) is disordered. A Phosphoserine modification is found at Ser9. The H15 domain maps to 38–111 (RGFSVSKLIP…GASGSFKLSK (74 aa)). A Citrulline modification is found at Arg56. A disordered region spans residues 95–208 (LVQTKGTGAS…TDLRKAAGRK (114 aa)). The segment covering 121 to 134 (KGKKSASAKAKKMG) has biased composition (basic residues). Phosphoserine is present on Ser141. The segment covering 143–154 (KSSKTKAVKKPK) has biased composition (basic residues). Thr156 is subject to Phosphothreonine. A phosphoserine mark is found at Ser163 and Ser178. Positions 199-208 (TDLRKAAGRK) are enriched in basic and acidic residues.

This sequence belongs to the histone H1/H5 family. In terms of processing, phosphorylated in early spermatids. Post-translationally, citrullination at Arg-56 (H1R54ci) by PADI4 takes place within the DNA-binding site of H1 and results in its displacement from chromatin and global chromatin decondensation, thereby promoting pluripotency and stem cell maintenance. In terms of tissue distribution, testis-specific.

It localises to the nucleus. Its subcellular location is the chromosome. In terms of biological role, testis-specific histone H1 that forms less compacted chromatin compared to other H1 histone subtypes. Formation of more relaxed chromatin may be required to promote chromatin architecture required for proper chromosome regulation during meiosis, such as homologous recombination. Histones H1 act as linkers that bind to nucleosomes and compact polynucleosomes into a higher-order chromatin configuration. This Mus musculus (Mouse) protein is Histone H1t.